Reading from the N-terminus, the 119-residue chain is Large ribosomal subunit protein bL20 (119 aa).

It belongs to the bacterial ribosomal protein bL20 family.

Its function is as follows. Binds directly to 23S ribosomal RNA and is necessary for the in vitro assembly process of the 50S ribosomal subunit. It is not involved in the protein synthesizing functions of that subunit. The chain is Large ribosomal subunit protein bL20 from Thiobacillus denitrificans (strain ATCC 25259 / T1).